Here is a 416-residue protein sequence, read N- to C-terminus: Multifunctional CCA protein (416 aa).

The ATP site is built by Gly8 and Arg11. CTP is bound by residues Gly8 and Arg11. The Mg(2+) site is built by Asp21 and Asp23. ATP-binding residues include Arg91, Arg138, and Arg141. 3 residues coordinate CTP: Arg91, Arg138, and Arg141. One can recognise an HD domain in the interval 229–331 (TGLHQELVSD…YELLQRCDAF (103 aa)).

It belongs to the tRNA nucleotidyltransferase/poly(A) polymerase family. Bacterial CCA-adding enzyme type 1 subfamily. Monomer. Can also form homodimers and oligomers. Mg(2+) serves as cofactor. Requires Ni(2+) as cofactor.

It carries out the reaction a tRNA precursor + 2 CTP + ATP = a tRNA with a 3' CCA end + 3 diphosphate. It catalyses the reaction a tRNA with a 3' CCA end + 2 CTP + ATP = a tRNA with a 3' CCACCA end + 3 diphosphate. Its function is as follows. Catalyzes the addition and repair of the essential 3'-terminal CCA sequence in tRNAs without using a nucleic acid template. Adds these three nucleotides in the order of C, C, and A to the tRNA nucleotide-73, using CTP and ATP as substrates and producing inorganic pyrophosphate. tRNA 3'-terminal CCA addition is required both for tRNA processing and repair. Also involved in tRNA surveillance by mediating tandem CCA addition to generate a CCACCA at the 3' terminus of unstable tRNAs. While stable tRNAs receive only 3'-terminal CCA, unstable tRNAs are marked with CCACCA and rapidly degraded. The sequence is that of Multifunctional CCA protein from Xylella fastidiosa (strain M23).